The following is a 116-amino-acid chain: MNACVLSVLCLLGALAVLVEGVTVQDGDLSFPLESVKKLKGLREVQEPRLVSHKKFAPRLLQPVAPQLCSSHSALPEALRPVCEKPNAEEILQRLEAIAQDPNTCEICAYAACTGC.

An N-terminal signal peptide occupies residues 1-23 (MNACVLSVLCLLGALAVLVEGVT). Positions 24–101 (VQDGDLSFPL…LQRLEAIAQD (78 aa)) are excised as a propeptide. 3 disulfides stabilise this stretch: cysteine 69/cysteine 83, cysteine 105/cysteine 113, and cysteine 108/cysteine 116.

The protein belongs to the guanylin family. As to expression, localized in both crypts and villi in the small intestine and to superficial epithelial cells in the colon.

The protein resides in the secreted. Its function is as follows. Endogenous activator of intestinal guanylate cyclase. It stimulates this enzyme through the same receptor binding region as the heat-stable enterotoxins. The protein is Guanylin (Guca2a) of Mus musculus (Mouse).